A 201-amino-acid polypeptide reads, in one-letter code: IMP cyclohydrolase (201 aa).

The protein belongs to the archaeal IMP cyclohydrolase family.

It catalyses the reaction IMP + H2O = 5-formamido-1-(5-phospho-D-ribosyl)imidazole-4-carboxamide. Its pathway is purine metabolism; IMP biosynthesis via de novo pathway; IMP from 5-formamido-1-(5-phospho-D-ribosyl)imidazole-4-carboxamide: step 1/1. In terms of biological role, catalyzes the cyclization of 5-formylamidoimidazole-4-carboxamide ribonucleotide to IMP. This Methanocella arvoryzae (strain DSM 22066 / NBRC 105507 / MRE50) protein is IMP cyclohydrolase.